We begin with the raw amino-acid sequence, 225 residues long: MRAVVVLSGGMDSTTLLYDVKNQGYETYTISFLYGQKHSKELEFAKKTCELLKVPHKIVDISFFADLAPSALTKSSWSVPEGYYTDESMKQTVVPNRNMVFLSLATSYAISLKAQKLFYGAHAGDHPIYPDCRKEFVEAMKRSILLCDYQIVELEAPYVDLKKEDILKIGLKLGVDYSLTWSCYKGGEKACGRCGTCTERIEAFRKIGVKDPIEYEIEIDWDQKT.

7–17 (LSGGMDSTTLL) contacts ATP. Zn(2+) is bound by residues Cys-183, Cys-191, Cys-194, and Cys-197.

It belongs to the QueC family. As to quaternary structure, homodimer. Zn(2+) serves as cofactor.

It carries out the reaction 7-carboxy-7-deazaguanine + NH4(+) + ATP = 7-cyano-7-deazaguanine + ADP + phosphate + H2O + H(+). The protein operates within purine metabolism; 7-cyano-7-deazaguanine biosynthesis. Its function is as follows. Catalyzes the ATP-dependent conversion of 7-carboxy-7-deazaguanine (CDG) to 7-cyano-7-deazaguanine (preQ(0)). The protein is 7-cyano-7-deazaguanine synthase of Caldicellulosiruptor saccharolyticus (strain ATCC 43494 / DSM 8903 / Tp8T 6331).